A 57-amino-acid polypeptide reads, in one-letter code: Zinc finger protein MJ0458.1 (57 aa).

4 consecutive short sequence motifs (c(P)XCG motif) follow at residues 8-12, 26-30, 37-41, and 49-53; these read CISCN, CPNCG, CERCR, and CPKCG. Cys-26 and Cys-29 together coordinate Zn(2+). 2 residues coordinate Zn(2+): Cys-49 and Cys-52.

Monomer in solution.

Zinc-binding protein that binds only one zinc ion. This Methanocaldococcus jannaschii (strain ATCC 43067 / DSM 2661 / JAL-1 / JCM 10045 / NBRC 100440) (Methanococcus jannaschii) protein is Zinc finger protein MJ0458.1.